We begin with the raw amino-acid sequence, 427 residues long: Glucose-6-phosphate isomerase (427 aa).

Residue Glu-277 is the Proton donor of the active site. Residues His-298 and Lys-414 contribute to the active site.

It belongs to the GPI family.

The protein localises to the cytoplasm. The enzyme catalyses alpha-D-glucose 6-phosphate = beta-D-fructose 6-phosphate. Its pathway is carbohydrate biosynthesis; gluconeogenesis. It functions in the pathway carbohydrate degradation; glycolysis; D-glyceraldehyde 3-phosphate and glycerone phosphate from D-glucose: step 2/4. Catalyzes the reversible isomerization of glucose-6-phosphate to fructose-6-phosphate. The protein is Glucose-6-phosphate isomerase of Mycoplasma capricolum subsp. capricolum (strain California kid / ATCC 27343 / NCTC 10154).